A 283-amino-acid chain; its full sequence is Probable endonuclease 4 (283 aa).

Zn(2+)-binding residues include histidine 69, histidine 109, glutamate 144, aspartate 178, histidine 181, histidine 215, aspartate 228, histidine 230, and glutamate 260.

It belongs to the AP endonuclease 2 family. The cofactor is Zn(2+).

It carries out the reaction Endonucleolytic cleavage to 5'-phosphooligonucleotide end-products.. Endonuclease IV plays a role in DNA repair. It cleaves phosphodiester bonds at apurinic or apyrimidinic (AP) sites, generating a 3'-hydroxyl group and a 5'-terminal sugar phosphate. The sequence is that of Probable endonuclease 4 from Thermosipho melanesiensis (strain DSM 12029 / CIP 104789 / BI429).